A 612-amino-acid polypeptide reads, in one-letter code: Proton pump-interactor 1 (612 aa).

Positions 1 to 58 (MGVEVVNSGGFEVAPAPFEGKPEKNGKLDQGKGDDAPINFGSVGELPKNAEENNNKVV) are disordered. Residues 20–35 (GKPEKNGKLDQGKGDD) show a composition bias toward basic and acidic residues. 2 coiled-coil regions span residues 90–113 (PKIK…RTGV) and 251–314 (LDGV…NSEY). Basic and acidic residues-rich tracts occupy residues 374 to 387 (LSRD…DEKP), 434 to 446 (EKAK…KNVA), 459 to 498 (PQKE…EKAA), and 505 to 519 (AQKE…EQEK). The disordered stretch occupies residues 374-572 (LSRDGRMRNP…PIRNRTRGRG (199 aa)). Positions 466–526 (VDAATAKEMR…QEKKAKKKTG (61 aa)) form a coiled coil. Residues 531–545 (TETEEVPEASEEEIE) show a composition bias toward acidic residues. Serine 540 bears the Phosphoserine mark. The segment covering 549–564 (QEEKPQKEKVFKEKPI) has biased composition (basic and acidic residues). The helical transmembrane segment at 591–611 (VYAAPAALVVLLLLVLGYYYV) threads the bilayer.

Belongs to the plant Proton pump-interactor protein family. In terms of assembly, interacts with AHA1 via N-terminal region. In terms of tissue distribution, strongly expressed in root and shoot vascular systems, particularly in meristematic and sink tissues. Also present in pollen, stigmas and siliques, but not in developing embryos.

It is found in the cell membrane. The protein resides in the endoplasmic reticulum membrane. Its function is as follows. Promotes AHA1 plasma membrane ATPase activity by binding to a site different from the 14-3-3 binding site. This chain is Proton pump-interactor 1 (PPI1), found in Arabidopsis thaliana (Mouse-ear cress).